The primary structure comprises 159 residues: MKRAICSGSFDPVTNGHIDLFERAGALFDEIIIAILINNKKKPLFPLAERERLLRESIAHIKNATIDSFDGLLVDYAREKEATAIVRGLRSNADFEYEKNIATMNKELAPQLDTLFLMTDPNYSYVSSSIVKEVASYSQDVSKLVPQPVAHALKEVYRR.

A substrate-binding site is contributed by S9. Residues 9–10 (SF) and H17 each bind ATP. The substrate site is built by K41, L73, and R87. Residues 88-90 (GLR), E98, and 123-129 (YSYVSSS) each bind ATP.

This sequence belongs to the bacterial CoaD family. Homohexamer. Requires Mg(2+) as cofactor.

It localises to the cytoplasm. It carries out the reaction (R)-4'-phosphopantetheine + ATP + H(+) = 3'-dephospho-CoA + diphosphate. It participates in cofactor biosynthesis; coenzyme A biosynthesis; CoA from (R)-pantothenate: step 4/5. Its function is as follows. Reversibly transfers an adenylyl group from ATP to 4'-phosphopantetheine, yielding dephospho-CoA (dPCoA) and pyrophosphate. The polypeptide is Phosphopantetheine adenylyltransferase (Shouchella clausii (strain KSM-K16) (Alkalihalobacillus clausii)).